The sequence spans 562 residues: NRAMP-like transporter smf-1 (562 aa).

The Cytoplasmic portion of the chain corresponds to 1 to 55 (MASSNNDGPIEPEAEPWRITQNDHLEQDLLEEDAESQERVDIPVDDVEKAFSFKK). The helical transmembrane segment at 56-76 (LWAFTGPGFLMSIAYLDPGNI) threads the bilayer. Residues 77–83 (ESDLQSG) lie on the Extracellular side of the membrane. The chain crosses the membrane as a helical span at residues 84-104 (AQAAYKLLWVLLSAHIIGMLL). Residues 105–140 (QRMSARLGVVSGKHMAEVAYQFYPRLPRIILWLMIE) lie on the Cytoplasmic side of the membrane. Residues 141-161 (IAIVCSDMQEVIGTAIAIFLL) form a helical membrane-spanning segment. The Extracellular portion of the chain corresponds to 162–164 (SKG). A helical membrane pass occupies residues 165–185 (FVPLYVGVFITILDTFTFLLI). The Cytoplasmic segment spans residues 186 to 194 (DRYGIRKLE). The helical transmembrane segment at 195–215 (LIFGFLILTMTVSFGYEFVVV) threads the bilayer. The Extracellular portion of the chain corresponds to 216–241 (KPPIGEVISGMVVPWCAGCGKGEFMQ). Residues 242–262 (AISVVGAVIMPHNLYLHSALV) traverse the membrane as a helical segment. At 263 to 287 (KSRRVDRKDRRRVAEANKYFTLESA) the chain is on the cytoplasmic side. A helical transmembrane segment spans residues 288 to 308 (IALFLSFFINLFVVAVFAHGL). Over 309-347 (YQKTNADVREMCIARHDIPDADIFPNNTEPVEVDIYKGG) the chain is Extracellular. Asn334 is a glycosylation site (N-linked (GlcNAc...) asparagine). The chain crosses the membrane as a helical span at residues 348 to 368 (IYLGCQFGAIAMFIWGIGIFA). The Cytoplasmic segment spans residues 369–398 (AGQSSTMTGTYTGQFVMEGFVKIEWPKWKR). Residues 399–419 (VLITRAIAITPTLVLTFYSQG) form a helical membrane-spanning segment. The Extracellular portion of the chain corresponds to 420 to 428 (VQNLTGMND). A glycan (N-linked (GlcNAc...) asparagine) is linked at Asn422. The helical transmembrane segment at 429–449 (FLNCVQMIQLPFALIPIITFT) threads the bilayer. The Cytoplasmic segment spans residues 450–462 (SSRKIMHDFRSSK). Residues 463–483 (VFQIFALITSALILSINVYFI) form a helical membrane-spanning segment. Residues 484 to 496 (SDYVFSRLGSEWY) lie on the Extracellular side of the membrane. A helical transmembrane segment spans residues 497–517 (IIMVLAPITFAYVLFVLYLAL). The Cytoplasmic segment spans residues 518–562 (YCLVSCEIIPDTVSIRGFSFNKSYENDAPWLAVDSSAVHDNAGYQ).

This sequence belongs to the NRAMP family. Expressed in dopaminergic neurons (at protein level). Expressed predominantly in anterior and posterior intestine, rectal gland cell, H-shaped excretory cell, vulva cells, proximal uterus and spermatheca in adults. Weakly expressed in hyp7 hypodermis, pharyngeal muscles and some anterior sensory, ring and posterior head neurons in adults. Expressed in the anchor cell at the larval stage.

It localises to the apical cell membrane. The protein localises to the cytoplasmic vesicle membrane. Probable divalent metal ion transporter which regulates Mn(2+) uptake. The sequence is that of NRAMP-like transporter smf-1 (smf-1) from Caenorhabditis elegans.